Reading from the N-terminus, the 249-residue chain is Cis-4-hydroxycyclohexanecarboxylate dehydrogenase (249 aa).

Residues D38, D63, V64, N90, Y156, K160, A189, and T191 each contribute to the NAD(+) site. The active-site Proton acceptor is the Y156.

Belongs to the short-chain dehydrogenases/reductases (SDR) family. As to quaternary structure, homotetramer.

The enzyme catalyses cis-4-hydroxycyclohexane-1-carboxylate + NAD(+) = 4-oxocyclohexane-1-carboxylate + NADH + H(+). Functionally, dehydrogenase involved in a cyclohexanecarboxylate (CHCA) degradation pathway. Catalyzes the NAD(+)-dependent dehydrogenation of cis-4-hydroxycyclohexanecarboxylate (cis-4-hydroxyCHCA) to form 4-oxocyclohexanecarboxylate (4-oxoCHCA). Is highly specific for the cis-4-hydroxy derivative and shows only weak activity with trans-4-hydroxyCHCA. Cannot use NADP(+). The sequence is that of Cis-4-hydroxycyclohexanecarboxylate dehydrogenase from Sinomonas cyclohexanicum (Corynebacterium cyclohexanicum).